The sequence spans 334 residues: ADP-L-glycero-D-manno-heptose-6-epimerase (334 aa).

NADP(+) contacts are provided by residues 11-12, 32-33, lysine 39, lysine 54, 77-81, and asparagine 94; these read FI, DN, and QGACS. Residue tyrosine 141 is the Proton acceptor of the active site. NADP(+) is bound at residue lysine 145. Asparagine 171 is a substrate binding site. Positions 172 and 180 each coordinate NADP(+). The active-site Proton acceptor is lysine 180. Substrate contacts are provided by residues arginine 182, histidine 189, 203-206, arginine 216, and tyrosine 295; that span reads FGSN.

Belongs to the NAD(P)-dependent epimerase/dehydratase family. HldD subfamily. In terms of assembly, homopentamer. Requires NADP(+) as cofactor.

It carries out the reaction ADP-D-glycero-beta-D-manno-heptose = ADP-L-glycero-beta-D-manno-heptose. The protein operates within nucleotide-sugar biosynthesis; ADP-L-glycero-beta-D-manno-heptose biosynthesis; ADP-L-glycero-beta-D-manno-heptose from D-glycero-beta-D-manno-heptose 7-phosphate: step 4/4. It participates in bacterial outer membrane biogenesis; LOS core biosynthesis. Functionally, catalyzes the interconversion between ADP-D-glycero-beta-D-manno-heptose and ADP-L-glycero-beta-D-manno-heptose via an epimerization at carbon 6 of the heptose. This Neisseria gonorrhoeae protein is ADP-L-glycero-D-manno-heptose-6-epimerase.